A 1342-amino-acid polypeptide reads, in one-letter code: DNA-directed RNA polymerase subunit beta (1342 aa).

The protein belongs to the RNA polymerase beta chain family. As to quaternary structure, the RNAP catalytic core consists of 2 alpha, 1 beta, 1 beta' and 1 omega subunit. When a sigma factor is associated with the core the holoenzyme is formed, which can initiate transcription.

The enzyme catalyses RNA(n) + a ribonucleoside 5'-triphosphate = RNA(n+1) + diphosphate. Functionally, DNA-dependent RNA polymerase catalyzes the transcription of DNA into RNA using the four ribonucleoside triphosphates as substrates. In Salmonella typhi, this protein is DNA-directed RNA polymerase subunit beta.